Reading from the N-terminus, the 156-residue chain is Small ribosomal subunit protein uS7 (156 aa).

Belongs to the universal ribosomal protein uS7 family. In terms of assembly, part of the 30S ribosomal subunit. Contacts proteins S9 and S11.

One of the primary rRNA binding proteins, it binds directly to 16S rRNA where it nucleates assembly of the head domain of the 30S subunit. Is located at the subunit interface close to the decoding center, probably blocks exit of the E-site tRNA. The chain is Small ribosomal subunit protein uS7 from Lactobacillus acidophilus (strain ATCC 700396 / NCK56 / N2 / NCFM).